The chain runs to 481 residues: Glycogen synthase (481 aa).

Position 16 (Lys16) interacts with ADP-alpha-D-glucose.

This sequence belongs to the glycosyltransferase 1 family. Bacterial/plant glycogen synthase subfamily.

The enzyme catalyses [(1-&gt;4)-alpha-D-glucosyl](n) + ADP-alpha-D-glucose = [(1-&gt;4)-alpha-D-glucosyl](n+1) + ADP + H(+). It functions in the pathway glycan biosynthesis; glycogen biosynthesis. Functionally, synthesizes alpha-1,4-glucan chains using ADP-glucose. The protein is Glycogen synthase of Cellvibrio japonicus (strain Ueda107) (Pseudomonas fluorescens subsp. cellulosa).